The primary structure comprises 229 residues: Protein FAM3C (229 aa).

Residues 1-24 (MRIAGAIKFVVAVALFLLTFYVIS) form the signal peptide. 2 disulfide bridges follow: C59-C87 and C65-C222. In terms of domain architecture, GG-type lectin spans 68 to 226 (KHFAFKIASG…VEMEGCIPQK (159 aa)).

The protein belongs to the FAM3 family. Expressed in the retinal ganglion cell layer.

It localises to the secreted. Functionally, involved in retinal laminar formation. This is Protein FAM3C (fam3c) from Xenopus laevis (African clawed frog).